The chain runs to 129 residues: Small ribosomal subunit protein uS11 (129 aa).

It belongs to the universal ribosomal protein uS11 family. Part of the 30S ribosomal subunit. Interacts with proteins S7 and S18. Binds to IF-3.

Functionally, located on the platform of the 30S subunit, it bridges several disparate RNA helices of the 16S rRNA. Forms part of the Shine-Dalgarno cleft in the 70S ribosome. The chain is Small ribosomal subunit protein uS11 from Methylorubrum populi (strain ATCC BAA-705 / NCIMB 13946 / BJ001) (Methylobacterium populi).